Here is a 551-residue protein sequence, read N- to C-terminus: Arylsulfatase (551 aa).

The first 20 residues, 1 to 20 (MKSAPFLFLLGLLGLVTAQT), serve as a signal peptide directing secretion. Glutamine 21 carries the post-translational modification Blocked amino end (Gln). The Ca(2+) site is built by aspartate 60, histidine 61, and cysteine 100. The active-site Nucleophile is the cysteine 100. Cysteine 100 is modified (3-oxoalanine (Cys)). The active site involves histidine 158. N-linked (GlcNAc...) asparagine glycosylation is found at asparagine 164, asparagine 213, and asparagine 296. 2 residues coordinate Ca(2+): aspartate 308 and histidine 309.

Belongs to the sulfatase family. Ca(2+) is required as a cofactor. In terms of processing, the conversion to 3-oxoalanine (also known as C-formylglycine, FGly), of a serine or cysteine residue in prokaryotes and of a cysteine residue in eukaryotes, is critical for catalytic activity.

It is found in the cytoplasm. The protein resides in the secreted. Its subcellular location is the extracellular space. It localises to the extracellular matrix. The catalysed reaction is an aryl sulfate + H2O = a phenol + sulfate + H(+). Its function is as follows. May be a structural component of the extracellular matrices involved in cell movement during morphogenesis. The chain is Arylsulfatase from Hemicentrotus pulcherrimus (Sea urchin).